A 528-amino-acid polypeptide reads, in one-letter code: Tyrosine--tRNA ligase, cytoplasmic (528 aa).

Met-1 is subject to N-acetylmethionine. An N-acetylglycine; in Tyrosine--tRNA ligase, cytoplasmic, N-terminally processed modification is found at Gly-2. Tyr-39 provides a ligand contact to L-tyrosine. A trans-resveratrol-binding site is contributed by Tyr-39. The short motif at 44-52 (TTGKPHVAY) is the 'HIGH' region element. The L-tyrosine site is built by Tyr-166, Gln-170, Asp-173, and Gln-188. Trans-resveratrol-binding residues include Gln-170 and Asp-173. Lys-197 bears the N6-acetyllysine mark. Phosphoserine is present on Ser-205. N6-acetyllysine is present on Lys-206. The 'KMSKS' region signature appears at 222 to 226 (KMSSS). Residues 242–247 (KKKLKK) carry the Nuclear localization signal motif. The disordered stretch occupies residues 339 to 363 (AAYPDPSKQKPMAKGPAKNSEPEEV). The 105-residue stretch at 364-468 (IPSRLDIRVG…AGSAPGERVF (105 aa)) folds into the tRNA-binding domain. Ser-386 bears the Phosphoserine mark. N6-acetyllysine occurs at positions 474, 482, and 490.

It belongs to the class-I aminoacyl-tRNA synthetase family. Homodimer. Interacts (when binding to resveratrol) with PARP1; interaction stimulates the poly-ADP-ribosyltransferase activity of PARP1.

It is found in the cytoplasm. The protein localises to the nucleus. It carries out the reaction tRNA(Tyr) + L-tyrosine + ATP = L-tyrosyl-tRNA(Tyr) + AMP + diphosphate + H(+). Its activity is regulated as follows. Resveratrol strongly inhibits the tyrosine--tRNA ligase activity. In terms of biological role, tyrosine--tRNA ligase that catalyzes the attachment of tyrosine to tRNA(Tyr) in a two-step reaction: tyrosine is first activated by ATP to form Tyr-AMP and then transferred to the acceptor end of tRNA(Tyr). Also acts as a positive regulator of poly-ADP-ribosylation in the nucleus, independently of its tyrosine--tRNA ligase activity. Activity is switched upon resveratrol-binding: resveratrol strongly inhibits the tyrosine--tRNA ligase activity and promotes relocalization to the nucleus, where YARS1 specifically stimulates the poly-ADP-ribosyltransferase activity of PARP1. This Pongo abelii (Sumatran orangutan) protein is Tyrosine--tRNA ligase, cytoplasmic (YARS1).